We begin with the raw amino-acid sequence, 356 residues long: Alanine racemase, catabolic (356 aa).

The active-site Proton acceptor; specific for D-alanine is K35. An N6-(pyridoxal phosphate)lysine modification is found at K35. Substrate is bound at residue R130. Y253 (proton acceptor; specific for L-alanine) is an active-site residue. Residue M301 participates in substrate binding.

The protein belongs to the alanine racemase family. Requires pyridoxal 5'-phosphate as cofactor.

The enzyme catalyses L-alanine = D-alanine. Isomerizes L-alanine to D-alanine which is then oxidized to pyruvate by DadA. The protein is Alanine racemase, catabolic (dadX) of Escherichia coli O157:H7.